Reading from the N-terminus, the 66-residue chain is Ejaculatory bulb-specific protein 2 (66 aa).

The N-terminal stretch at 1–20 (MIRILVLMITFTLMTGSALC) is a signal peptide.

Specifically expressed in the ejaculatory bulb and seminal fluid.

The protein resides in the secreted. Functionally, protein component of the posterior mating plug. This Drosophila melanogaster (Fruit fly) protein is Ejaculatory bulb-specific protein 2.